The sequence spans 123 residues: Small ribosomal subunit protein uS12c (123 aa).

Residues 1–16 (MPTIQQLIRNSRQPAE) show a composition bias toward polar residues. Residues 1-23 (MPTIQQLIRNSRQPAENRTKSPA) are disordered.

The protein belongs to the universal ribosomal protein uS12 family. In terms of assembly, part of the 30S ribosomal subunit.

It localises to the plastid. The protein resides in the chloroplast. In terms of biological role, with S4 and S5 plays an important role in translational accuracy. Located at the interface of the 30S and 50S subunits. This Staurastrum punctulatum (Green alga) protein is Small ribosomal subunit protein uS12c (rps12).